The primary structure comprises 359 residues: DNA replication and repair protein RecF (359 aa).

30–37 is a binding site for ATP; sequence GNNGSGKT.

This sequence belongs to the RecF family.

It is found in the cytoplasm. Functionally, the RecF protein is involved in DNA metabolism; it is required for DNA replication and normal SOS inducibility. RecF binds preferentially to single-stranded, linear DNA. It also seems to bind ATP. The sequence is that of DNA replication and repair protein RecF from Haemophilus influenzae (strain 86-028NP).